Here is a 526-residue protein sequence, read N- to C-terminus: 1,4-beta-D-glucan cellobiohydrolase B (526 aa).

An N-terminal signal peptide occupies residues 1–23 (MASSFQLYKALLFFSSLLSAVQA). The interval 24–458 (QKVGTQQAEV…SNIKFGPIGS (435 aa)) is catalytic. The active-site Nucleophile is glutamate 235. The active-site Proton donor is the glutamate 240. N-linked (GlcNAc...) asparagine glycosylation is found at asparagine 293 and asparagine 400. The ser/Thr-rich linker stretch occupies residues 459 to 490 (TFGNGGGSGPTTTVTTSTATSTTSSATSTATG). Positions 464 to 488 (GGSGPTTTVTTSTATSTTSSATSTA) are disordered. Positions 468–488 (PTTTVTTSTATSTTSSATSTA) are enriched in low complexity. Positions 490–526 (GQAQHWEQCGGNGWTGPTVCASPWACTVVNSWYSQCL) constitute a CBM1 domain. 2 cysteine pairs are disulfide-bonded: cysteine 498–cysteine 515 and cysteine 509–cysteine 525.

The protein belongs to the glycosyl hydrolase 7 (cellulase C) family.

Its subcellular location is the secreted. The catalysed reaction is Hydrolysis of (1-&gt;4)-beta-D-glucosidic linkages in cellulose and cellotetraose, releasing cellobiose from the non-reducing ends of the chains.. The biological conversion of cellulose to glucose generally requires three types of hydrolytic enzymes: (1) Endoglucanases which cut internal beta-1,4-glucosidic bonds; (2) Exocellobiohydrolases that cut the disaccharide cellobiose from the non-reducing end of the cellulose polymer chain; (3) Beta-1,4-glucosidases which hydrolyze the cellobiose and other short cello-oligosaccharides to glucose. The sequence is that of 1,4-beta-D-glucan cellobiohydrolase B (cbhB) from Emericella nidulans (strain FGSC A4 / ATCC 38163 / CBS 112.46 / NRRL 194 / M139) (Aspergillus nidulans).